The chain runs to 466 residues: Argininosuccinate lyase (466 aa).

It belongs to the lyase 1 family. Argininosuccinate lyase subfamily.

The protein localises to the cytoplasm. The catalysed reaction is 2-(N(omega)-L-arginino)succinate = fumarate + L-arginine. Its pathway is amino-acid biosynthesis; L-arginine biosynthesis; L-arginine from L-ornithine and carbamoyl phosphate: step 3/3. The polypeptide is Argininosuccinate lyase (Campylobacter concisus (strain 13826)).